The primary structure comprises 311 residues: Ribonuclease HIII (311 aa).

In terms of domain architecture, RNase H type-2 spans 95 to 311; sequence MSIVGSDEVG…NTEKAFRLLK (217 aa). A divalent metal cation contacts are provided by Asp-101, Glu-102, and Asp-206.

It belongs to the RNase HII family. RnhC subfamily. Mn(2+) is required as a cofactor. The cofactor is Mg(2+).

The protein resides in the cytoplasm. The catalysed reaction is Endonucleolytic cleavage to 5'-phosphomonoester.. In terms of biological role, endonuclease that specifically degrades the RNA of RNA-DNA hybrids. This is Ribonuclease HIII from Bacillus cereus (strain AH187).